Here is a 329-residue protein sequence, read N- to C-terminus: 7,8-didemethyl-8-hydroxy-5-deazariboflavin synthase (329 aa).

Residues 6 to 244 form the Radical SAM core domain; it reads ITYTKNVFLP…EEISIQVAPN (239 aa). Residues cysteine 20, cysteine 24, and cysteine 27 each coordinate [4Fe-4S] cluster.

The protein belongs to the radical SAM superfamily. CofG family. In terms of assembly, consists of two subunits, CofG and CofH. [4Fe-4S] cluster is required as a cofactor.

It catalyses the reaction 5-amino-5-(4-hydroxybenzyl)-6-(D-ribitylimino)-5,6-dihydrouracil + S-adenosyl-L-methionine = 7,8-didemethyl-8-hydroxy-5-deazariboflavin + 5'-deoxyadenosine + L-methionine + NH4(+) + H(+). It participates in cofactor biosynthesis; coenzyme F0 biosynthesis. Catalyzes the radical-mediated synthesis of 7,8-didemethyl-8-hydroxy-5-deazariboflavin from 5-amino-5-(4-hydroxybenzyl)-6-(D-ribitylimino)-5,6-dihydrouracil. The chain is 7,8-didemethyl-8-hydroxy-5-deazariboflavin synthase from Methanoregula boonei (strain DSM 21154 / JCM 14090 / 6A8).